The primary structure comprises 573 residues: Threonine--tRNA ligase (573 aa).

The segment at 174–474 is catalytic; sequence DHRRINKILE…LLEQTKGALD (301 aa). Residues Cys-268, His-319, and His-451 each contribute to the Zn(2+) site.

It belongs to the class-II aminoacyl-tRNA synthetase family. In terms of assembly, homodimer. It depends on Zn(2+) as a cofactor.

It localises to the cytoplasm. The enzyme catalyses tRNA(Thr) + L-threonine + ATP = L-threonyl-tRNA(Thr) + AMP + diphosphate + H(+). Its function is as follows. Catalyzes the attachment of threonine to tRNA(Thr) in a two-step reaction: L-threonine is first activated by ATP to form Thr-AMP and then transferred to the acceptor end of tRNA(Thr). Also edits incorrectly charged L-seryl-tRNA(Thr). The sequence is that of Threonine--tRNA ligase from Mycoplasmoides gallisepticum (strain R(low / passage 15 / clone 2)) (Mycoplasma gallisepticum).